We begin with the raw amino-acid sequence, 255 residues long: MGKKILVQRAGRGGSQFRSPSWRRIAPLRYVQFSEEQLKTTIRGIIKELVHVTGLNAPAMHVVLENGEEMYLPAVEGVYVGKIIEFGPDAKVEPGNVMPIGKIPEGTMVCNIEKRVGDGGKYARSSGTYGVVMIHRDSTTLVQLPSGRMIEVDSRARATIGIVAGGGRIEKPFVKAGNKYHRARTKAWKYPKVRGKAMSAYAHPHGGGSHQQGGTPVKKNAPPGQKVGFYGSKCTGRGCVRWRAQQAKTQQRQQA.

The segment at 201–229 (YAHPHGGGSHQQGGTPVKKNAPPGQKVGF) is disordered.

The protein belongs to the universal ribosomal protein uL2 family. In terms of assembly, part of the 50S ribosomal subunit. Forms a bridge to the 30S subunit in the 70S ribosome.

In terms of biological role, one of the primary rRNA binding proteins. Required for association of the 30S and 50S subunits to form the 70S ribosome, for tRNA binding and peptide bond formation. It has been suggested to have peptidyltransferase activity; this is somewhat controversial. Makes several contacts with the 16S rRNA in the 70S ribosome. This is Large ribosomal subunit protein uL2 from Caldivirga maquilingensis (strain ATCC 700844 / DSM 13496 / JCM 10307 / IC-167).